We begin with the raw amino-acid sequence, 186 residues long: MSSFRLGVSRVARQVRAPCVRNTRRYASDSHAPADHTHSAAGHGEHHHANAADANEELGTAFYVIFGAIPAFGALYYFSRPGKDGQPNSITKWLQKWEEHQEALADKNALVTAALEQAAHDKHLFYYVDQLRSGHYEMKYPEVFQHGSARNVPAGTYIPLDKVVEVYRKQHLDEEERKAKKLAAAN.

A mitochondrion-targeting transit peptide spans M1–Y26. The segment at N22–A49 is disordered. A compositionally biased stretch (basic and acidic residues) spans Y26–A49. A helical transmembrane segment spans residues L58–F78.

As to quaternary structure, complex I is composed of about 40 different subunits.

It localises to the mitochondrion inner membrane. The enzyme catalyses a ubiquinone + NADH + 5 H(+)(in) = a ubiquinol + NAD(+) + 4 H(+)(out). In terms of biological role, transfer of electrons from NADH to the respiratory chain. The immediate electron acceptor for the enzyme is believed to be ubiquinone. The sequence is that of NADH-ubiquinone oxidoreductase 17.8 kDa subunit, mitochondrial (nuo17.8) from Neurospora crassa (strain ATCC 24698 / 74-OR23-1A / CBS 708.71 / DSM 1257 / FGSC 987).